The sequence spans 558 residues: Glutamine--tRNA ligase (558 aa).

A 'HIGH' region motif is present at residues 36 to 46 (PEPNGYLHLGH). ATP contacts are provided by residues 37 to 39 (EPN) and 43 to 49 (HLGHAKS). Residues Asp-69 and Tyr-214 each contribute to the L-glutamine site. Residues Thr-233, 263 to 264 (RL), and 271 to 273 (LSK) contribute to the ATP site. The 'KMSKS' region signature appears at 270–274 (LLSKR).

The protein belongs to the class-I aminoacyl-tRNA synthetase family. As to quaternary structure, monomer.

The protein localises to the cytoplasm. It catalyses the reaction tRNA(Gln) + L-glutamine + ATP = L-glutaminyl-tRNA(Gln) + AMP + diphosphate. The polypeptide is Glutamine--tRNA ligase (Nitrobacter hamburgensis (strain DSM 10229 / NCIMB 13809 / X14)).